The following is a 21-amino-acid chain: Fibrinogen beta chain (21 aa).

Residue Gln-1 is modified to Pyrrolidone carboxylic acid. The segment covering 1-10 (QFPTDYDEGQ) has biased composition (acidic residues). Residues 1-21 (QFPTDYDEGQDDRPKLGLGAR) form a disordered region. A glycan (O-linked (GalNAc...) threonine) is linked at Thr-4. Tyr-6 carries the sulfotyrosine modification.

In terms of assembly, heterohexamer; disulfide linked. Contains 2 sets of 3 non-identical chains (alpha, beta and gamma). The 2 heterotrimers are in head to head conformation with the N-termini in a small central domain. Conversion of fibrinogen to fibrin is triggered by thrombin, which cleaves fibrinopeptides A and B from alpha and beta chains, and thus exposes the N-terminal polymerization sites responsible for the formation of the soft clot.

Its subcellular location is the secreted. In terms of biological role, cleaved by the protease thrombin to yield monomers which, together with fibrinogen alpha (FGA) and fibrinogen gamma (FGG), polymerize to form an insoluble fibrin matrix. Fibrin has a major function in hemostasis as one of the primary components of blood clots. In addition, functions during the early stages of wound repair to stabilize the lesion and guide cell migration during re-epithelialization. Was originally thought to be essential for platelet aggregation, based on in vitro studies using anticoagulated blood. However subsequent studies have shown that it is not absolutely required for thrombus formation in vivo. Enhances expression of SELP in activated platelets. Maternal fibrinogen is essential for successful pregnancy. Fibrin deposition is also associated with infection, where it protects against IFNG-mediated hemorrhage. May also facilitate the antibacterial immune response via both innate and T-cell mediated pathways. The sequence is that of Fibrinogen beta chain (FGB) from Bubalus bubalis (Domestic water buffalo).